Consider the following 61-residue polypeptide: Small ribosomal subunit protein uS14B (61 aa).

Cys24, Cys27, Cys40, and Cys43 together coordinate Zn(2+).

It belongs to the universal ribosomal protein uS14 family. Zinc-binding uS14 subfamily. As to quaternary structure, part of the 30S ribosomal subunit. Contacts proteins S3 and S10. The cofactor is Zn(2+).

Functionally, binds 16S rRNA, required for the assembly of 30S particles and may also be responsible for determining the conformation of the 16S rRNA at the A site. The protein is Small ribosomal subunit protein uS14B of Mycobacteroides abscessus (strain ATCC 19977 / DSM 44196 / CCUG 20993 / CIP 104536 / JCM 13569 / NCTC 13031 / TMC 1543 / L948) (Mycobacterium abscessus).